Reading from the N-terminus, the 256-residue chain is Triosephosphate isomerase (256 aa).

12 to 14 is a substrate binding site; it reads NWK. H99 serves as the catalytic Electrophile. The Proton acceptor role is filled by E169. Substrate is bound by residues G175, S214, and 235–236; that span reads GG.

It belongs to the triosephosphate isomerase family. As to quaternary structure, homodimer.

The protein resides in the cytoplasm. It catalyses the reaction D-glyceraldehyde 3-phosphate = dihydroxyacetone phosphate. It participates in carbohydrate biosynthesis; gluconeogenesis. The protein operates within carbohydrate degradation; glycolysis; D-glyceraldehyde 3-phosphate from glycerone phosphate: step 1/1. Its function is as follows. Involved in the gluconeogenesis. Catalyzes stereospecifically the conversion of dihydroxyacetone phosphate (DHAP) to D-glyceraldehyde-3-phosphate (G3P). The chain is Triosephosphate isomerase from Mesorhizobium japonicum (strain LMG 29417 / CECT 9101 / MAFF 303099) (Mesorhizobium loti (strain MAFF 303099)).